Here is a 163-residue protein sequence, read N- to C-terminus: Urease accessory protein UreE (163 aa).

Residues Q144–H163 form a disordered region.

It belongs to the UreE family.

It localises to the cytoplasm. Its function is as follows. Involved in urease metallocenter assembly. Binds nickel. Probably functions as a nickel donor during metallocenter assembly. The protein is Urease accessory protein UreE of Aliivibrio fischeri (strain MJ11) (Vibrio fischeri).